Consider the following 88-residue polypeptide: Small ribosomal subunit protein uS15 (88 aa).

Residues 1–12 (MLTNTDRQQVIA) are compositionally biased toward polar residues. Residues 1–23 (MLTNTDRQQVIAQYQRAPGDTGS) are disordered.

It belongs to the universal ribosomal protein uS15 family. In terms of assembly, part of the 30S ribosomal subunit. Forms a bridge to the 50S subunit in the 70S ribosome, contacting the 23S rRNA.

Functionally, one of the primary rRNA binding proteins, it binds directly to 16S rRNA where it helps nucleate assembly of the platform of the 30S subunit by binding and bridging several RNA helices of the 16S rRNA. In terms of biological role, forms an intersubunit bridge (bridge B4) with the 23S rRNA of the 50S subunit in the ribosome. This Psychrobacter sp. (strain PRwf-1) protein is Small ribosomal subunit protein uS15.